The following is a 247-amino-acid chain: 1-(5-phosphoribosyl)-5-[(5-phosphoribosylamino)methylideneamino] imidazole-4-carboxamide isomerase (247 aa).

The active-site Proton acceptor is D8. Catalysis depends on D130, which acts as the Proton donor.

Belongs to the HisA/HisF family.

Its subcellular location is the cytoplasm. The catalysed reaction is 1-(5-phospho-beta-D-ribosyl)-5-[(5-phospho-beta-D-ribosylamino)methylideneamino]imidazole-4-carboxamide = 5-[(5-phospho-1-deoxy-D-ribulos-1-ylimino)methylamino]-1-(5-phospho-beta-D-ribosyl)imidazole-4-carboxamide. The protein operates within amino-acid biosynthesis; L-histidine biosynthesis; L-histidine from 5-phospho-alpha-D-ribose 1-diphosphate: step 4/9. The sequence is that of 1-(5-phosphoribosyl)-5-[(5-phosphoribosylamino)methylideneamino] imidazole-4-carboxamide isomerase from Stutzerimonas stutzeri (strain A1501) (Pseudomonas stutzeri).